The sequence spans 647 residues: MNALLELKGIERSYPAGEQQIKVLDDVTLSIYAGEMVAIIGASGSGKSTLMNILGCLDQPSNGEYRVAGQNVAELNNDELAALRREHFGFIFQRYHLLTHLTAEQNVEIPAIYAGAAKAARRQRAIELLGRLGLEDRIYYQPGQLSGGQQQRVSIARALMNGGQVILADEPTGALDSHSGEEVMAILKQLCEQGHTVIIVTHDPKIAAQAQRIIEIKDGHIMSDSGTQVSRKITQTPSLTSKISSIRQIFGRFNEALFMAWRAMVVNKMRTLLTMLGIIIGIASVVTILVIGDAARASVLSDIKEIATNTIDIYPGEDFGIDDPVSKQALKIADADAIKVQPYILAVSPEIEGQMRLRKGNIDVSSKVTGVGDEYFQVYALRFAQGIGFSLDMIRRQGQVVVIDKNTQRKLFPHQKNVIGEVILVGNMPATIVGVIANRESAFGNSKLLHIWLPYSTMTSRLMNRSYLDSITVRVKDDYNSKDAEKMIVQLLTLRHGKKDIFTDNVDMLVKAAEKTAHTLQLFLTMVAVISLIVGGIGVMNIMLVSVTERTREIGIRMAVGARTSDVRQQFLIEAILVCLVGGVLGIGLSYTIAFIAQLALPGWHFVFQPIALLSAFACSTAIGVIFGFLPARNAARLDPIEALARE.

Residues 5–243 form the ABC transporter domain; sequence LELKGIERSY…TQTPSLTSKI (239 aa). 41 to 48 contacts ATP; it reads GASGSGKS. 4 helical membrane-spanning segments follow: residues 272–292, 522–542, 576–596, and 610–630; these read LLTMLGIIIGIASVVTILVIG, LFLTMVAVISLIVGGIGVMNI, ILVCLVGGVLGIGLSYTIAFI, and PIALLSAFACSTAIGVIFGFL.

Belongs to the ABC transporter superfamily. Macrolide exporter (TC 3.A.1.122) family. In terms of assembly, homodimer. Part of the tripartite efflux system MacAB-TolC, which is composed of an inner membrane transporter, MacB, a periplasmic membrane fusion protein, MacA, and an outer membrane component, TolC. The complex forms a large protein conduit and can translocate molecules across both the inner and outer membranes. Interacts with MacA.

It is found in the cell inner membrane. Part of the tripartite efflux system MacAB-TolC. MacB is a non-canonical ABC transporter that contains transmembrane domains (TMD), which form a pore in the inner membrane, and an ATP-binding domain (NBD), which is responsible for energy generation. Confers resistance against macrolides. This is Macrolide export ATP-binding/permease protein MacB from Photorhabdus laumondii subsp. laumondii (strain DSM 15139 / CIP 105565 / TT01) (Photorhabdus luminescens subsp. laumondii).